The following is a 243-amino-acid chain: Phosphate-specific transport system accessory protein PhoU (243 aa).

Belongs to the PhoU family. As to quaternary structure, homodimer. Interacts with phosphate regulon transcriptional regulatory protein PhoB and ferric uptake regulation protein Fur.

The protein resides in the cytoplasm. Its function is as follows. Part of the phosphate (Pho) regulon, which plays a key role in phosphate homeostasis. Encoded together with proteins of the phosphate-specific transport (Pst) system in the polycistronic pstSCAB-phoU operon. PhoU is essential for the repression of the Pho regulon at high phosphate conditions. In this role, it may bind, possibly as a chaperone, to PhoR, PhoB or a PhoR-PhoB complex to promote dephosphorylation of phospho-PhoB, or inhibit formation of the PhoR-PhoB transitory complex. This chain is Phosphate-specific transport system accessory protein PhoU, found in Edwardsiella tarda.